Reading from the N-terminus, the 305-residue chain is Transmembrane epididymal protein 1A (305 aa).

Residues 4–24 (FIGHISPGLFLVFYGLYQAVI) traverse the membrane as a helical segment. N32 is a glycosylation site (N-linked (GlcNAc...) asparagine). 5 helical membrane-spanning segments follow: residues 54–74 (IAHAGWLKVVIGSLLIVYEIS), 124–144 (CVLLERGATVLGVYVLLLLLV), 159–179 (SLLILVVFLLMLVLTAELWAP), 187–207 (IETFLILIMGSWLIQAAFILF), and 223–243 (IMFVTTFFCWHVMINALCMLG). The segment at 285-305 (EQQDKDDQAPLLSKISPCDRA) is disordered.

It belongs to the TMEM45 family.

It localises to the membrane. This Mus musculus (Mouse) protein is Transmembrane epididymal protein 1A.